Reading from the N-terminus, the 428-residue chain is Cholesterol 7-desaturase (428 aa).

A helical membrane pass occupies residues 6 to 26; the sequence is IWGFLTAHPISVVTTILIVYL. Positions 81–187 constitute a Rieske domain; sequence WYCVCESEKL…CIERNNNIYL (107 aa). The [2Fe-2S] cluster site is built by Cys122, His124, Cys143, and His146.

This sequence belongs to the cholesterol 7-desaturase family. The cofactor is [2Fe-2S] cluster. As to expression, expressed in intestine at all postembryonic stages, including dauer. Expression is reduced in daf-2 mutants.

Its subcellular location is the membrane. The enzyme catalyses cholesterol + NADPH + O2 + H(+) = 7-dehydrocholesterol + NADP(+) + 2 H2O. It carries out the reaction cholesterol + NADH + O2 + H(+) = 7-dehydrocholesterol + NAD(+) + 2 H2O. It functions in the pathway steroid hormone biosynthesis; dafachronic acid biosynthesis. Functionally, catalyzes the production of 7-dehydrocholesterol (7-DHC or cholesta-5,7-dien-3beta-ol) by inserting a double bond (desaturating) at the C7-C8 single bond of cholesterol. This reaction is the first step in the synthesis of the steroid hormone Delta(7)-dafachronic acid (one of the principal steroid hormones in nematodes). Dafachronic acids bind directly to the nuclear hormone receptor (NHR) daf-12, suppressing dauer formation and inducing reproductive growth. This Caenorhabditis elegans protein is Cholesterol 7-desaturase (daf-36).